A 376-amino-acid chain; its full sequence is Actin-like protein 53D (376 aa).

Residues Met1–Ile40 are necessary and sufficient for recruitment to the fusome and actin cones of spermatocyte cysts.

This sequence belongs to the actin family. ARP1 subfamily. In terms of tissue distribution, high expression in males whereas expression in females is very low. In adult males, highest levels of expression are in the testis. In adult females, expressed only in the ovaries at very low levels. In larvae, highly expressed in the imaginal disk whereas in prepupae and pupae modest levels of expression occur in the fat body.

It is found in the cytoplasm. The protein localises to the cytoskeleton. Required for optimal embryo development, particularly under heat stress conditions. Also appears to have a role in negatively regulating spermatocyte cyst development. Under heat stress conditions, required for the correct organization and migration of nuclei during early embryogenesis, and therefore possibly functions by regulating embryonic actin networks during the heat stress response. This is Actin-like protein 53D from Drosophila melanogaster (Fruit fly).